Reading from the N-terminus, the 219-residue chain is Large ribosomal subunit protein uL3 (219 aa).

The segment at 133–153 (GRASHGNSRSHNVPGSIGMAQ) is disordered. The residue at position 153 (Gln-153) is an N5-methylglutamine.

Belongs to the universal ribosomal protein uL3 family. As to quaternary structure, part of the 50S ribosomal subunit. Forms a cluster with proteins L14 and L19. Methylated by PrmB.

In terms of biological role, one of the primary rRNA binding proteins, it binds directly near the 3'-end of the 23S rRNA, where it nucleates assembly of the 50S subunit. The polypeptide is Large ribosomal subunit protein uL3 (Burkholderia thailandensis (strain ATCC 700388 / DSM 13276 / CCUG 48851 / CIP 106301 / E264)).